Consider the following 166-residue polypeptide: Prorelaxin H1 (166 aa).

An N-terminal signal peptide occupies residues 1-5 (SRAVA). Cystine bridges form between cysteine 16-cysteine 153, cysteine 28-cysteine 166, and cysteine 152-cysteine 157. Positions 37–139 (SLSQEDAPQT…KYLGLDTHSQ (103 aa)) are cleaved as a propeptide — connecting peptide.

Belongs to the insulin family. Heterodimer of a B chain and an A chain linked by two disulfide bonds. In terms of tissue distribution, expressed in the corpus luteum of pregnancy but not in the placenta.

It localises to the secreted. Relaxin is an ovarian hormone that acts with estrogen to produce dilatation of the birth canal in many mammals. May be involved in remodeling of connective tissues during pregnancy, promoting growth of pubic ligaments and ripening of the cervix. In Pan troglodytes (Chimpanzee), this protein is Prorelaxin H1 (RNL1).